Consider the following 308-residue polypeptide: HPr kinase/phosphorylase (308 aa).

Residues histidine 138 and lysine 159 contribute to the active site. Residue 153–160 (GESGLGKS) coordinates ATP. Residue serine 160 participates in Mg(2+) binding. Catalysis depends on aspartate 177, which acts as the Proton acceptor; for phosphorylation activity. Proton donor; for dephosphorylation activity. Residues 201-210 (LEVRGLGLLD) are important for the catalytic mechanism of both phosphorylation and dephosphorylation. Glutamate 202 is a binding site for Mg(2+). Arginine 243 is a catalytic residue. The important for the catalytic mechanism of dephosphorylation stretch occupies residues 264–269 (QVAAGR).

This sequence belongs to the HPrK/P family. As to quaternary structure, homohexamer. The cofactor is Mg(2+).

The enzyme catalyses [HPr protein]-L-serine + ATP = [HPr protein]-O-phospho-L-serine + ADP + H(+). It carries out the reaction [HPr protein]-O-phospho-L-serine + phosphate + H(+) = [HPr protein]-L-serine + diphosphate. Catalyzes the ATP- as well as the pyrophosphate-dependent phosphorylation of a specific serine residue in HPr, a phosphocarrier protein of the phosphoenolpyruvate-dependent sugar phosphotransferase system (PTS). HprK/P also catalyzes the pyrophosphate-producing, inorganic phosphate-dependent dephosphorylation (phosphorolysis) of seryl-phosphorylated HPr (P-Ser-HPr). In Bordetella avium (strain 197N), this protein is HPr kinase/phosphorylase.